Consider the following 300-residue polypeptide: ADP-polyphosphate phosphotransferase 1 (300 aa).

Belongs to the polyphosphate kinase 2 (PPK2) family. Class I subfamily. Homotetramer. Mg(2+) is required as a cofactor.

It catalyses the reaction [phosphate](n) + ATP = [phosphate](n+1) + ADP. It carries out the reaction [phosphate](n) + GTP = [phosphate](n+1) + GDP. Functionally, uses inorganic polyphosphate (polyP) as a donor to convert ADP to ATP. Can also convert GDP to GTP, with lower efficiency. Cannot dephosphorylate ATP in the presence of polyP. The sequence is that of ADP-polyphosphate phosphotransferase 1 from Rhizobium meliloti (strain 1021) (Ensifer meliloti).